Here is a 231-residue protein sequence, read N- to C-terminus: 7-cyano-7-deazaguanine synthase (231 aa).

8-18 serves as a coordination point for ATP; it reads FSGGQDSTTCL. Zn(2+) contacts are provided by cysteine 188, cysteine 197, cysteine 200, and cysteine 203.

This sequence belongs to the QueC family. Zn(2+) is required as a cofactor.

It carries out the reaction 7-carboxy-7-deazaguanine + NH4(+) + ATP = 7-cyano-7-deazaguanine + ADP + phosphate + H2O + H(+). It participates in purine metabolism; 7-cyano-7-deazaguanine biosynthesis. Its function is as follows. Catalyzes the ATP-dependent conversion of 7-carboxy-7-deazaguanine (CDG) to 7-cyano-7-deazaguanine (preQ(0)). This chain is 7-cyano-7-deazaguanine synthase, found in Escherichia coli (strain SE11).